Reading from the N-terminus, the 549-residue chain is Chaperonin GroEL 5 (549 aa).

ATP contacts are provided by residues 30–33, Lys51, 87–91, Gly415, and Asp495; these read TLGP and DGTTT.

Belongs to the chaperonin (HSP60) family. As to quaternary structure, forms a cylinder of 14 subunits composed of two heptameric rings stacked back-to-back. Interacts with the co-chaperonin GroES.

It localises to the cytoplasm. It catalyses the reaction ATP + H2O + a folded polypeptide = ADP + phosphate + an unfolded polypeptide.. In terms of biological role, together with its co-chaperonin GroES, plays an essential role in assisting protein folding. The GroEL-GroES system forms a nano-cage that allows encapsulation of the non-native substrate proteins and provides a physical environment optimized to promote and accelerate protein folding. This chain is Chaperonin GroEL 5, found in Mesorhizobium japonicum (strain LMG 29417 / CECT 9101 / MAFF 303099) (Mesorhizobium loti (strain MAFF 303099)).